Consider the following 972-residue polypeptide: Multiple C2 domain and transmembrane region protein 8 (972 aa).

The C2 1 domain occupies 1–107; it reads MMSNLKLGVE…PYSEAVGLPY (107 aa). A disordered region spans residues 142–203; the sequence is PNLISTKKIP…MMESSLYQAP (62 aa). Residues 150-159 are compositionally biased toward basic residues; it reads IPSKSRHKFH. Residues 161 to 173 show a composition bias toward polar residues; the sequence is IPTNESNHSPRGN. A compositionally biased stretch (pro residues) spans 179–194; it reads PQPPPPQSQTALPPPM. C2 domains follow at residues 232–352, 384–507, and 543–669; these read GGGK…PEWY, ALNA…NRWF, and YSSD…SHSY. Ca(2+) is bound by residues Asp265, Asp271, Asp318, Asp320, and Asp325. The next 2 helical transmembrane spans lie at 803-823 and 924-944; these read IIFLVLVCSPEMILPVMSLCL and TVVLYVVPFKVFVLLAGLYIM.

The protein belongs to the MCTP family. Requires Ca(2+) as cofactor. Expressed in root hairs.

Its subcellular location is the membrane. It localises to the vesicle. Its function is as follows. May function as a signaling molecule by regulating the trafficking of other regulators. This Arabidopsis thaliana (Mouse-ear cress) protein is Multiple C2 domain and transmembrane region protein 8.